A 160-amino-acid polypeptide reads, in one-letter code: Cytochrome b6-f complex subunit 4 (160 aa).

Helical transmembrane passes span 36 to 56 (LLYV…GLAV), 95 to 115 (LLGI…PFIE), and 131 to 151 (TFFM…IFPI).

It belongs to the cytochrome b family. PetD subfamily. In terms of assembly, the 4 large subunits of the cytochrome b6-f complex are cytochrome b6, subunit IV (17 kDa polypeptide, PetD), cytochrome f and the Rieske protein, while the 4 small subunits are PetG, PetL, PetM and PetN. The complex functions as a dimer.

It localises to the cellular thylakoid membrane. In terms of biological role, component of the cytochrome b6-f complex, which mediates electron transfer between photosystem II (PSII) and photosystem I (PSI), cyclic electron flow around PSI, and state transitions. This chain is Cytochrome b6-f complex subunit 4, found in Gloeothece citriformis (strain PCC 7424) (Cyanothece sp. (strain PCC 7424)).